The primary structure comprises 218 residues: ATP-dependent Clp protease proteolytic subunit 2 (218 aa).

The active-site Nucleophile is S114. Residue H139 is part of the active site.

The protein belongs to the peptidase S14 family. As to quaternary structure, fourteen ClpP subunits assemble into 2 heptameric rings which stack back to back to give a disk-like structure with a central cavity, resembling the structure of eukaryotic proteasomes.

The protein resides in the cytoplasm. It carries out the reaction Hydrolysis of proteins to small peptides in the presence of ATP and magnesium. alpha-casein is the usual test substrate. In the absence of ATP, only oligopeptides shorter than five residues are hydrolyzed (such as succinyl-Leu-Tyr-|-NHMec, and Leu-Tyr-Leu-|-Tyr-Trp, in which cleavage of the -Tyr-|-Leu- and -Tyr-|-Trp bonds also occurs).. In terms of biological role, cleaves peptides in various proteins in a process that requires ATP hydrolysis. Has a chymotrypsin-like activity. Plays a major role in the degradation of misfolded proteins. Probably partially responsible for degradation of ECF sigma factor SigR prime. In Streptomyces coelicolor (strain ATCC BAA-471 / A3(2) / M145), this protein is ATP-dependent Clp protease proteolytic subunit 2.